The chain runs to 260 residues: HLA class II histocompatibility antigen, DP alpha 1 chain (260 aa).

The N-terminal stretch at 1–28 (MRPEDRMFHIRAVILRALSLAFLLSLRG) is a signal peptide. Residues 29-115 (AGAIKADHVS…QRSNHTQATN (87 aa)) are alpha-1. Residues 29 to 222 (AGAIKADHVS…EPIQMPETTE (194 aa)) lie on the Extracellular side of the membrane. Asn-109 and Asn-149 each carry an N-linked (GlcNAc...) asparagine glycan. Positions 116–209 (DPPEVTVFPK…GLDQPLLKHW (94 aa)) are alpha-2. The region spanning 118–210 (PEVTVFPKEP…LDQPLLKHWE (93 aa)) is the Ig-like C1-type domain. Cysteines 138 and 194 form a disulfide. Residues 210–222 (EAQEPIQMPETTE) form a connecting peptide region. A helical membrane pass occupies residues 223 to 245 (TVLCALGLVLGLVGIIVGTVLII). At 246–260 (KSLRSGHDPRAQGTL) the chain is on the cytoplasmic side.

This sequence belongs to the MHC class II family. In terms of assembly, heterodimer of an alpha and a beta subunit; also referred as MHC class II molecule. In the endoplasmic reticulum (ER) it forms a heterononamer; 3 MHC class II molecules bind to a CD74 homotrimer (also known as invariant chain or HLA class II histocompatibility antigen gamma chain). In the endosomal/lysosomal system; CD74 undergoes sequential degradation by various proteases; leaving a small fragment termed CLIP on each MHC class II molecule. MHC class II molecule interacts with HLA_DM, and HLA_DO in B-cells, in order to release CLIP and facilitate the binding of antigenic peptides.

Its subcellular location is the cell membrane. It localises to the endoplasmic reticulum membrane. The protein localises to the golgi apparatus. It is found in the trans-Golgi network membrane. The protein resides in the endosome membrane. Its subcellular location is the lysosome membrane. Binds peptides derived from antigens that access the endocytic route of antigen presenting cells (APC) and presents them on the cell surface for recognition by the CD4 T-cells. The peptide binding cleft accommodates peptides of 10-30 residues. The peptides presented by MHC class II molecules are generated mostly by degradation of proteins that access the endocytic route, where they are processed by lysosomal proteases and other hydrolases. Exogenous antigens that have been endocytosed by the APC are thus readily available for presentation via MHC II molecules, and for this reason this antigen presentation pathway is usually referred to as exogenous. As membrane proteins on their way to degradation in lysosomes as part of their normal turn-over are also contained in the endosomal/lysosomal compartments, exogenous antigens must compete with those derived from endogenous components. Autophagy is also a source of endogenous peptides, autophagosomes constitutively fuse with MHC class II loading compartments. In addition to APCs, other cells of the gastrointestinal tract, such as epithelial cells, express MHC class II molecules and CD74 and act as APCs, which is an unusual trait of the GI tract. To produce a MHC class II molecule that presents an antigen, three MHC class II molecules (heterodimers of an alpha and a beta chain) associate with a CD74 trimer in the ER to form a heterononamer. Soon after the entry of this complex into the endosomal/lysosomal system where antigen processing occurs, CD74 undergoes a sequential degradation by various proteases, including CTSS and CTSL, leaving a small fragment termed CLIP (class-II-associated invariant chain peptide). The removal of CLIP is facilitated by HLA-DM via direct binding to the alpha-beta-CLIP complex so that CLIP is released. HLA-DM stabilizes MHC class II molecules until primary high affinity antigenic peptides are bound. The MHC II molecule bound to a peptide is then transported to the cell membrane surface. In B-cells, the interaction between HLA-DM and MHC class II molecules is regulated by HLA-DO. Primary dendritic cells (DCs) also to express HLA-DO. Lysosomal microenvironment has been implicated in the regulation of antigen loading into MHC II molecules, increased acidification produces increased proteolysis and efficient peptide loading. This is HLA class II histocompatibility antigen, DP alpha 1 chain (HLA-DPA1) from Homo sapiens (Human).